We begin with the raw amino-acid sequence, 70 residues long: Large ribosomal subunit protein eL24 (70 aa).

The Zn(2+) site is built by cysteine 6, cysteine 9, cysteine 32, and cysteine 36. A C4-type zinc finger spans residues 6–36 (CSYCGRPIPPGYGIMYVRVDGVVLRFCSRRC).

Belongs to the eukaryotic ribosomal protein eL24 family. Part of the 50S ribosomal subunit. Forms a cluster with proteins L3 and L14. Zn(2+) is required as a cofactor.

In terms of biological role, binds to the 23S rRNA. This is Large ribosomal subunit protein eL24 from Caldivirga maquilingensis (strain ATCC 700844 / DSM 13496 / JCM 10307 / IC-167).